The primary structure comprises 123 residues: Small ribosomal subunit protein uS12 (123 aa).

At Asp-89 the chain carries 3-methylthioaspartic acid.

Belongs to the universal ribosomal protein uS12 family. In terms of assembly, part of the 30S ribosomal subunit. Contacts proteins S8 and S17. May interact with IF1 in the 30S initiation complex.

Its function is as follows. With S4 and S5 plays an important role in translational accuracy. Functionally, interacts with and stabilizes bases of the 16S rRNA that are involved in tRNA selection in the A site and with the mRNA backbone. Located at the interface of the 30S and 50S subunits, it traverses the body of the 30S subunit contacting proteins on the other side and probably holding the rRNA structure together. The combined cluster of proteins S8, S12 and S17 appears to hold together the shoulder and platform of the 30S subunit. The protein is Small ribosomal subunit protein uS12 of Myxococcus xanthus.